Consider the following 938-residue polypeptide: Cyclin-dependent kinase-like 5 (938 aa).

Residues 13–297 (FEILGVVGEG…TEQCLNHPTF (285 aa)) enclose the Protein kinase domain. Residues 19–27 (VGEGAYGVV) and Lys-42 each bind ATP. The active-site Proton acceptor is the Asp-135. 4 disordered regions span residues 298 to 348 (QTQR…DIQN), 382 to 566 (KTYQ…RHSK), 646 to 865 (SPQP…LTAQ), and 877 to 938 (HPLS…KWKQ). Composition is skewed to polar residues over residues 319–331 (ESST…QSTK) and 382–402 (KTYQ…NNNI). Ser-407 carries the phosphoserine modification. Over residues 407-417 (SPKEAKSKTEF) the composition is skewed to basic and acidic residues. 3 stretches are compositionally biased toward polar residues: residues 434-462 (LKSS…QPSE), 473-482 (IPQSSRSPSY), and 494-548 (DSKS…SGRN). Position 479 is a phosphoserine (Ser-479). Basic and acidic residues-rich tracts occupy residues 549 to 559 (NRNEGTLDSRR) and 679 to 704 (QKSE…RHLY). Position 720 is a phosphoserine (Ser-720). Residues 728 to 748 (HENNVSTRVSSLPSDSSSGTN) show a composition bias toward polar residues. The residue at position 761 (Ser-761) is a Phosphoserine. 2 stretches are compositionally biased toward basic and acidic residues: residues 769–778 (DQLKEKEKQG) and 817–827 (RPKEWRPEKLS). A compositionally biased stretch (polar residues) spans 880 to 891 (SQATGGSSNIRQ).

It belongs to the protein kinase superfamily. CMGC Ser/Thr protein kinase family. CDC2/CDKX subfamily. As to quaternary structure, interacts with MECP2. Post-translationally, autophosphorylated.

It is found in the nucleus. Its subcellular location is the cytoplasm. It localises to the cytoskeleton. The protein resides in the cilium basal body. The protein localises to the microtubule organizing center. It is found in the centrosome. It catalyses the reaction L-seryl-[protein] + ATP = O-phospho-L-seryl-[protein] + ADP + H(+). It carries out the reaction L-threonyl-[protein] + ATP = O-phospho-L-threonyl-[protein] + ADP + H(+). Functionally, mediates phosphorylation of MECP2. May regulate ciliogenesis. The sequence is that of Cyclin-dependent kinase-like 5 from Mus musculus (Mouse).